The following is a 507-amino-acid chain: Alkyl hydroperoxide reductase subunit F (507 aa).

Position 207–222 (207–222 (DVLIVGGGPASGSAAI)) interacts with FAD. Cysteine 335 and cysteine 338 form a disulfide bridge. 347 to 361 (DVAVIGGGNSGVEAA) is an NAD(+) binding site. 467–477 (TNVPGIFAAGD) provides a ligand contact to FAD.

Belongs to the class-II pyridine nucleotide-disulfide oxidoreductase family. In terms of assembly, homodimer. Requires FAD as cofactor.

Functionally, serves to protect the cell against DNA damage by alkyl hydroperoxides. It can use either NADH or NADPH as electron donor for direct reduction of redox dyes or of alkyl hydroperoxides when combined with the AhpC protein. In Staphylococcus epidermidis (strain ATCC 12228 / FDA PCI 1200), this protein is Alkyl hydroperoxide reductase subunit F (ahpF).